The following is a 364-amino-acid chain: 3-isopropylmalate dehydrogenase (364 aa).

Position 76–89 (76–89 (GPKWEKLPPNEQPE)) interacts with NAD(+). The substrate site is built by Arg97, Arg107, Arg136, and Asp225. Positions 225, 249, and 253 each coordinate Mg(2+). 283–295 (GSAPDIAGKGIAN) lines the NAD(+) pocket.

Belongs to the isocitrate and isopropylmalate dehydrogenases family. LeuB type 1 subfamily. In terms of assembly, homodimer. Requires Mg(2+) as cofactor. The cofactor is Mn(2+).

The protein resides in the cytoplasm. The enzyme catalyses (2R,3S)-3-isopropylmalate + NAD(+) = 4-methyl-2-oxopentanoate + CO2 + NADH. Its pathway is amino-acid biosynthesis; L-leucine biosynthesis; L-leucine from 3-methyl-2-oxobutanoate: step 3/4. Catalyzes the oxidation of 3-carboxy-2-hydroxy-4-methylpentanoate (3-isopropylmalate) to 3-carboxy-4-methyl-2-oxopentanoate. The product decarboxylates to 4-methyl-2 oxopentanoate. The polypeptide is 3-isopropylmalate dehydrogenase (Shewanella oneidensis (strain ATCC 700550 / JCM 31522 / CIP 106686 / LMG 19005 / NCIMB 14063 / MR-1)).